Reading from the N-terminus, the 492-residue chain is Catalase-3 (492 aa).

Residues H65 and N138 contribute to the active site. Y348 lines the heme pocket.

It belongs to the catalase family. In terms of assembly, homotetramer and heterotetramer. At least six or seven isozymes are produced from a mixture of 3 gene products. Interacts with NCA1. Interacts with LSD1. Requires heme as cofactor.

It is found in the peroxisome. The enzyme catalyses 2 H2O2 = O2 + 2 H2O. Occurs in almost all aerobically respiring organisms and serves to protect cells from the toxic effects of hydrogen peroxide. The sequence is that of Catalase-3 (CAT3) from Arabidopsis thaliana (Mouse-ear cress).